The chain runs to 185 residues: Meiotic expression up-regulated protein 31 (185 aa).

This chain is Meiotic expression up-regulated protein 31 (meu31), found in Schizosaccharomyces pombe (strain 972 / ATCC 24843) (Fission yeast).